The sequence spans 489 residues: Serine/threonine-protein kinase dyf-5 (489 aa).

Positions 11-291 constitute a Protein kinase domain; it reads YLMTKRLGDG…ANQSLRYKYF (281 aa). ATP contacts are provided by residues 17-25 and lysine 40; that span reads LGDGTFGEV. Catalysis depends on aspartate 132, which acts as the Proton acceptor. 2 disordered regions span residues 366-385 and 452-489; these read EKSDNKPLGPTKSNEAKPTA and QTGPTVSNQTNNHSANNSHSPNKMSNTGRVDWAAKYVK. Residues 458-473 show a composition bias toward low complexity; sequence SNQTNNHSANNSHSPN.

Belongs to the protein kinase superfamily. CMGC Ser/Thr protein kinase family. RCK subfamily. Mg(2+) is required as a cofactor. As to expression, expressed in head neurons including amphid and labial sensory neurons and 3 pairs of neurons in the tail including phasmid sensory neurons. In male, expressed in the tail including the sensory rays and the spicule.

The protein localises to the perikaryon. It localises to the cell projection. Its subcellular location is the dendrite. It is found in the axon. The protein resides in the cilium. The catalysed reaction is L-seryl-[protein] + ATP = O-phospho-L-seryl-[protein] + ADP + H(+). It carries out the reaction L-threonyl-[protein] + ATP = O-phospho-L-threonyl-[protein] + ADP + H(+). Serine/threonine-protein kinase which is required for ciliogenesis. Regulates the length and the morphology of sensory neuron cilia. In addition, plays a role in the anterograde intraflagellar transport (IFT) in the cilia by regulating the undocking of kinesin-II motor complex (composed of klp-11, klp-20 and kap-1) before reaching the distal segment and the docking of kinesin motor osm-3 onto IFT cargos. The polypeptide is Serine/threonine-protein kinase dyf-5 (Caenorhabditis elegans).